The following is a 97-amino-acid chain: ATP-dependent Clp protease adapter protein ClpS (97 aa).

This sequence belongs to the ClpS family. Binds to the N-terminal domain of the chaperone ClpA.

Functionally, involved in the modulation of the specificity of the ClpAP-mediated ATP-dependent protein degradation. This is ATP-dependent Clp protease adapter protein ClpS from Nautilia profundicola (strain ATCC BAA-1463 / DSM 18972 / AmH).